The sequence spans 1220 residues: MGATGPTGAGGRATWVLAGNILAAALVLGSGPRALPPSFPALGPGSPSRPGPAGPWASSQYSDISREARGPFENGVIFQKCSLVSGQSESQTMHVQLSVNNTRTPTSVNLSNLLVLDEITGLAVKESPGNNTQDGIQTFRKSFLQVGECYSVSYTASLDPTALGTGESLDLPARLIFQSPSQNRTQLKAPFTITVEEKIMVLPNHGLHAAGFIAAFLISLLLTVAALFFLARGRCLQGGMLSRCRIQHPENKLEPSPFTSANGVSQDLSLNDQVVAILTSEEPGSMLQALEELEIATLNQADADLEACRNQISKDIIALLMKNLVSGGHLSPQTERKMAAAFKKQFLLLENEIQEEYERKMLALTAECDLEMRKKTENQYQREMVAMEEAEEVLKRVSERSAAECSSLLRTLHGLEQEDMQRSLTLDQAEDFAQAHRQLAVFQRNELHSIVYTQIQSAVSKGELRPEVAKMMLQDYSKTQESVEELMDFFQATKRYHLSKRFGHREYLVQRLQAMETRVQGLLNTAATQLTSLIHKHERAGYLDEDQMETLLERAQTETFSIKQKLDNDLKQEKKRLHQRLITRRRRELLQKHKEQQKEQVSLGEASSTAEDAVQYLHQWRSVMAEHTAALEELQERLDQAALDDLRVLTVSLSEKATEELRRLQSTAMTQELLKRSAPWLFLQQILEEHSRESAARTTQLEAEERERGQELVQGVRQRLQQDALEAYTEEQAELRHWEHLVFMKLCCAAISLSEEDLLRVRQEAQGCFSQLDRSLALPRVRARVLQQQAQMAWREAEFRKLDQALAAPELQSKARKLRSKGRGKADLLKKNLEDKIRLFEERAPVELADQVRGELLQERVQRLEAQEAHFAESLVALQFQKVARAAETLSVYTALLSIQDLLLGELSESETLTKSACVQILESHRPELQELQELERKLEDQLVQQEEAEQQRVLESWQRWAADGPGLSEPEEMDPERQVSAILRQALNKGQKLLEQHQQRVREEWQNGAVLEDSLESIEADTMASLCSQGLRLVSYLSRMTMVPGSTLLRLLSVVLPAASQPQLLALLDAVSEKHSDHTAENESSGEQAQAEQSKRRKHQVWWKVLDSRFRADLVSQGLERMLWARQKKERILKKIYVPVQERVMFPGKGSWPHLSLEPIGELAPIPITGADAMDILNTGEKIFVFRSPREPEISLRVPPRRKKNFLNAKKANRALGLD.

An N-terminal signal peptide occupies residues 1 to 29 (MGATGPTGAGGRATWVLAGNILAAALVLG). Residues 30-210 (SGPRALPPSF…VLPNHGLHAA (181 aa)) lie on the Extracellular side of the membrane. The disordered stretch occupies residues 38-59 (SFPALGPGSPSRPGPAGPWASS). N-linked (GlcNAc...) asparagine glycans are attached at residues Asn-100, Asn-109, and Asn-130. The helical transmembrane segment at 211 to 231 (GFIAAFLISLLLTVAALFFLA) threads the bilayer. Residues 232–1220 (RGRCLQGGML…KKANRALGLD (989 aa)) are Cytoplasmic-facing. Coiled coils occupy residues 355 to 404 (EEYE…SAAE), 563 to 644 (KQKL…AALD), 854 to 875 (GELL…AESL), and 920 to 1005 (QILE…VREE).

As to quaternary structure, component of the EvC complex composed of EFCAB7, IQCE, EVC2 and EVC; built from two subcomplexes, EVC2:EVC and EFCAB7:IQCE. Interacts with EVC. Interacts (via N-terminal end) with EFCAB7. Interacts (via N-terminal end) with IQCE. Expressed in long and cranial bones, kidney and heart. Strongly expressed in proliferating chondrocytes, osteoblasts and osteoclasts.

It is found in the cell membrane. The protein localises to the cytoplasm. The protein resides in the cytoskeleton. Its subcellular location is the cilium basal body. It localises to the cell projection. It is found in the cilium. The protein localises to the cilium membrane. The protein resides in the nucleus. Its function is as follows. Component of the EvC complex that positively regulates ciliary Hedgehog (Hh) signaling. Plays a critical role in bone formation and skeletal development. May be involved in early embryonic morphogenesis. This Mus musculus (Mouse) protein is Limbin (Evc2).